Reading from the N-terminus, the 394-residue chain is Saposin-like protein 11 (394 aa).

Positions 1–18 (MSVFRFLLFLSLLVGSNA) are cleaved as a signal peptide. Residues asparagine 25 and asparagine 272 are each glycosylated (N-linked (GlcNAc...) asparagine). In terms of domain architecture, Saposin B-type spans 306–394 (GNMVCDICEK…SFCKHVPFCK (89 aa)). 3 disulfide bridges follow: cysteine 310–cysteine 393, cysteine 313–cysteine 387, and cysteine 343–cysteine 359.

This chain is Saposin-like protein 11 (spp-11), found in Caenorhabditis elegans.